A 442-amino-acid polypeptide reads, in one-letter code: MRVLRACLSLCVLVVSDSKGSHELHQESGASNCGCLNGGKCVSYKYFSNIQRCSCPKKFQGEHCEIDTSQTCFEGNGHSYRGKANTNTGGRPCLPWNSATVLLNTYHAHRPDALQLGLGKHNYCRNPDNQRRPWCYVQVGLKQLVQECMVPNCSGGESHRPAYDGKNPFSTPEKVEFQCGQKALRPRFKIVGGKSTTIENQPWFAAIYRRHRGGSVTYVCGGSLISPCWVVSATHCFINYQQKEDYIVYLGRQTLHSSTHGEMKFEVEKLILHEDYSADSLAHHNDIALLKIRTDKGQCAQPSRSIQTICLPPVNGDAHFGASCEIVGFGKEDPSDYLYPEQLKMTVVKLVSHRECQQPHYYGSEVTTKMLCAADPQWKTDSCQGDSGGPLVCSTQGRLTLTGIVSWGRECAMKDKPGVYTRVSRFLTWIHTHVGGENGLAH.

The first 20 residues, Met-1–Gly-20, serve as a signal peptide directing secretion. One can recognise an EGF-like domain in the interval Gly-29–Glu-65. Cystine bridges form between Cys-33–Cys-41, Cys-35–Cys-53, Cys-55–Cys-64, Cys-72–Cys-153, Cys-93–Cys-135, Cys-124–Cys-148, Cys-179–Cys-310, Cys-220–Cys-236, Cys-228–Cys-299, Cys-324–Cys-393, Cys-356–Cys-372, and Cys-383–Cys-411. Positions Leu-36–Phe-59 are binds urokinase plasminogen activator surface receptor. The Kringle domain maps to Cys-72–Cys-153. Asn-152 carries N-linked (GlcNAc...) asparagine glycosylation. Positions Ser-154–Lys-189 are connecting peptide. Residues Ile-190–Gly-435 form the Peptidase S1 domain. Catalysis depends on charge relay system residues His-235 and Asp-286. The Charge relay system role is filled by Ser-387.

It belongs to the peptidase S1 family. As to quaternary structure, found in high and low molecular mass forms. Each consists of two chains, A and B. The high molecular mass form contains a long chain A which is cleaved to yield a short chain A. Forms heterodimer with SERPINA5. Binds LRP1B; binding is followed by internalization and degradation. Interacts with MRC2. Interacts with PLAUR. In complex with SERPINE1, interacts with PLAUR/uPAR. Interacts with SORL1 and LRP1, either alone or in complex with SERPINE1; these interactions are abolished in the presence of LRPAP1/RAP. The ternary complex composed of PLAUR-PLAU-PAI1 also interacts with SORLA. Post-translationally, produced as an inactive single-chain protein (pro-uPA or sc-uPA), is processed into the active disulfide-linked two-chain form of PLAU/uPA by a proteolytic event mediated, at least, by TMPRSS4.

The protein localises to the secreted. It catalyses the reaction Specific cleavage of Arg-|-Val bond in plasminogen to form plasmin.. With respect to regulation, inhibited by SERPINA5. Inhibited by SERPINE1. Specifically cleaves the zymogen plasminogen to form the active enzyme plasmin. This is Urokinase-type plasminogen activator (PLAU) from Sus scrofa (Pig).